The following is a 202-amino-acid chain: Small ribosomal subunit protein uS4 (202 aa).

Residues 21 to 42 (LSRKSPRRAYPPGQHGQARRKR) form a disordered region. An S4 RNA-binding domain is found at 90-152 (MRLDNTVFRL…DRSRKLVETN (63 aa)).

Belongs to the universal ribosomal protein uS4 family. In terms of assembly, part of the 30S ribosomal subunit. Contacts protein S5. The interaction surface between S4 and S5 is involved in control of translational fidelity.

Its function is as follows. One of the primary rRNA binding proteins, it binds directly to 16S rRNA where it nucleates assembly of the body of the 30S subunit. In terms of biological role, with S5 and S12 plays an important role in translational accuracy. The polypeptide is Small ribosomal subunit protein uS4 (Synechocystis sp. (strain ATCC 27184 / PCC 6803 / Kazusa)).